The chain runs to 319 residues: Acetyl-coenzyme A carboxylase carboxyl transferase subunit alpha (319 aa).

A CoA carboxyltransferase C-terminal domain is found at 32-293 (NVETEVRALR…KAVLLNELDA (262 aa)).

This sequence belongs to the AccA family. As to quaternary structure, acetyl-CoA carboxylase is a heterohexamer composed of biotin carboxyl carrier protein (AccB), biotin carboxylase (AccC) and two subunits each of ACCase subunit alpha (AccA) and ACCase subunit beta (AccD).

Its subcellular location is the cytoplasm. It carries out the reaction N(6)-carboxybiotinyl-L-lysyl-[protein] + acetyl-CoA = N(6)-biotinyl-L-lysyl-[protein] + malonyl-CoA. It functions in the pathway lipid metabolism; malonyl-CoA biosynthesis; malonyl-CoA from acetyl-CoA: step 1/1. In terms of biological role, component of the acetyl coenzyme A carboxylase (ACC) complex. First, biotin carboxylase catalyzes the carboxylation of biotin on its carrier protein (BCCP) and then the CO(2) group is transferred by the carboxyltransferase to acetyl-CoA to form malonyl-CoA. In Xanthomonas oryzae pv. oryzae (strain MAFF 311018), this protein is Acetyl-coenzyme A carboxylase carboxyl transferase subunit alpha.